A 114-amino-acid polypeptide reads, in one-letter code: uncharacterized protein (114 aa).

This sequence to M.jannaschii MJ0310 and MJ0714.

This is an uncharacterized protein from Methanocaldococcus jannaschii (strain ATCC 43067 / DSM 2661 / JAL-1 / JCM 10045 / NBRC 100440) (Methanococcus jannaschii).